Consider the following 122-residue polypeptide: Large ribosomal subunit protein uL14 (122 aa).

This sequence belongs to the universal ribosomal protein uL14 family. In terms of assembly, part of the 50S ribosomal subunit. Forms a cluster with proteins L3 and L19. In the 70S ribosome, L14 and L19 interact and together make contacts with the 16S rRNA in bridges B5 and B8.

Binds to 23S rRNA. Forms part of two intersubunit bridges in the 70S ribosome. The polypeptide is Large ribosomal subunit protein uL14 (Pediococcus pentosaceus (strain ATCC 25745 / CCUG 21536 / LMG 10740 / 183-1w)).